The following is a 91-amino-acid chain: Non-hemolytic enterotoxin 105 kDa component (91 aa).

The cofactor is Zn(2+).

It localises to the secreted. In terms of biological role, this protein is a metalloprotease with gelatinolytic and collagenolytic activity and is a component of the non-hemolytic enterotoxin complex (NHE). The sequence is that of Non-hemolytic enterotoxin 105 kDa component from Bacillus cereus.